We begin with the raw amino-acid sequence, 626 residues long: DEAD-box ATP-dependent RNA helicase 16 (626 aa).

The segment at 1–48 (MGKTKLKPVEDVNSEVVDEVEKAEEVEEQRNDREQEEEQKEEEAPKSF) is disordered. A coiled-coil region spans residues 9–47 (VEDVNSEVVDEVEKAEEVEEQRNDREQEEEQKEEEAPKS). Over residues 12–27 (VNSEVVDEVEKAEEVE) the composition is skewed to acidic residues. The short motif at 46 to 74 (KSFEELGLDSRLIRALTKKGIEKPTLIQQ) is the Q motif element. A Helicase ATP-binding domain is found at 77–259 (IPYILEGKDV…KLILHNPIVL (183 aa)). 90–97 (AKTGSGKT) contributes to the ATP binding site. The DEAD box signature appears at 207-210 (DEAD). The region spanning 293 to 477 (ALLKLEVVQK…PFPLLTENAV (185 aa)) is the Helicase C-terminal domain. Residues 356–385 (IATDDNSQTKKQKEEAKGEANKENKKNNKR) adopt a coiled-coil conformation. Over residues 363–381 (QTKKQKEEAKGEANKENKK) the composition is skewed to basic and acidic residues. Disordered stretches follow at residues 363-388 (QTKKQKEEAKGEANKENKKNNKRSKP) and 568-626 (AMGN…QKTV).

Belongs to the DEAD box helicase family. DDX56/DBP9 subfamily.

It catalyses the reaction ATP + H2O = ADP + phosphate + H(+). The polypeptide is DEAD-box ATP-dependent RNA helicase 16 (RH16) (Arabidopsis thaliana (Mouse-ear cress)).